The chain runs to 200 residues: Large ribosomal subunit protein uL4 (200 aa).

A disordered region spans residues 44 to 71; the sequence is AQKTRAEVSGGGKKPWRQKGTGRARAGS.

Belongs to the universal ribosomal protein uL4 family. As to quaternary structure, part of the 50S ribosomal subunit.

In terms of biological role, one of the primary rRNA binding proteins, this protein initially binds near the 5'-end of the 23S rRNA. It is important during the early stages of 50S assembly. It makes multiple contacts with different domains of the 23S rRNA in the assembled 50S subunit and ribosome. Its function is as follows. Forms part of the polypeptide exit tunnel. The sequence is that of Large ribosomal subunit protein uL4 from Psychrobacter sp. (strain PRwf-1).